Reading from the N-terminus, the 266-residue chain is ATP synthase subunit a (266 aa).

A run of 6 helical transmembrane segments spans residues 38–58 (KQML…VLAA), 99–119 (LLFS…IPLI), 126–146 (HVGG…AIGI), 162–182 (GVPW…NFVV), 191–211 (LFAT…GIEY), and 224–244 (SVLV…IMVL).

It belongs to the ATPase A chain family. In terms of assembly, F-type ATPases have 2 components, CF(1) - the catalytic core - and CF(0) - the membrane proton channel. CF(1) has five subunits: alpha(3), beta(3), gamma(1), delta(1), epsilon(1). CF(0) has three main subunits: a(1), b(2) and c(9-12). The alpha and beta chains form an alternating ring which encloses part of the gamma chain. CF(1) is attached to CF(0) by a central stalk formed by the gamma and epsilon chains, while a peripheral stalk is formed by the delta and b chains.

It localises to the cell membrane. Key component of the proton channel; it plays a direct role in the translocation of protons across the membrane. This chain is ATP synthase subunit a, found in Pseudarthrobacter chlorophenolicus (strain ATCC 700700 / DSM 12829 / CIP 107037 / JCM 12360 / KCTC 9906 / NCIMB 13794 / A6) (Arthrobacter chlorophenolicus).